The chain runs to 356 residues: UDP-N-acetylglucosamine--N-acetylmuramyl-(pentapeptide) pyrophosphoryl-undecaprenol N-acetylglucosamine transferase (356 aa).

Residues 15–17 (TGG), N127, R163, S191, I244, 263–268 (ALTVSE), and Q288 each bind UDP-N-acetyl-alpha-D-glucosamine.

This sequence belongs to the glycosyltransferase 28 family. MurG subfamily.

The protein resides in the cell inner membrane. The enzyme catalyses di-trans,octa-cis-undecaprenyl diphospho-N-acetyl-alpha-D-muramoyl-L-alanyl-D-glutamyl-meso-2,6-diaminopimeloyl-D-alanyl-D-alanine + UDP-N-acetyl-alpha-D-glucosamine = di-trans,octa-cis-undecaprenyl diphospho-[N-acetyl-alpha-D-glucosaminyl-(1-&gt;4)]-N-acetyl-alpha-D-muramoyl-L-alanyl-D-glutamyl-meso-2,6-diaminopimeloyl-D-alanyl-D-alanine + UDP + H(+). It functions in the pathway cell wall biogenesis; peptidoglycan biosynthesis. Its function is as follows. Cell wall formation. Catalyzes the transfer of a GlcNAc subunit on undecaprenyl-pyrophosphoryl-MurNAc-pentapeptide (lipid intermediate I) to form undecaprenyl-pyrophosphoryl-MurNAc-(pentapeptide)GlcNAc (lipid intermediate II). The chain is UDP-N-acetylglucosamine--N-acetylmuramyl-(pentapeptide) pyrophosphoryl-undecaprenol N-acetylglucosamine transferase from Yersinia pestis bv. Antiqua (strain Antiqua).